Reading from the N-terminus, the 350-residue chain is Serine-threonine kinase receptor-associated protein (350 aa).

WD repeat units follow at residues 12-56 (GHTR…GTFL), 57-96 (GHKG…ELMT), 98-137 (AHKH…AEPK), 141-179 (GHTS…EVKS), 180-212 (LNFN…HSAV), 221-262 (EAPA…ESYK), and 263-302 (GHFG…TYGL). Residues Ser-312, Ser-335, and Ser-338 each carry the phosphoserine modification.

It belongs to the WD repeat STRAP family. Part of the core SMN complex that contains SMN1, GEMIN2/SIP1, DDX20/GEMIN3, GEMIN4, GEMIN5, GEMIN6, GEMIN7, GEMIN8 and STRAP/UNRIP. Part of the SMN-Sm complex that contains SMN1, GEMIN2/SIP1, DDX20/GEMIN3, GEMIN4, GEMIN5, GEMIN6, GEMIN7, GEMIN8, STRAP/UNRIP and the Sm proteins SNRPB, SNRPD1, SNRPD2, SNRPD3, SNRPE, SNRPF and SNRPG. Associates with the SMN complex in the cytoplasm but not in the nucleus. Interacts with GEMIN6; the interaction is direct. Interacts with GEMIN7; the interaction is direct. Interacts with CSDE1/UNR and MAWBP. Interacts with PDPK1. Interacts with TRIM48.

Its subcellular location is the cytoplasm. The protein resides in the nucleus. In terms of biological role, the SMN complex catalyzes the assembly of small nuclear ribonucleoproteins (snRNPs), the building blocks of the spliceosome, and thereby plays an important role in the splicing of cellular pre-mRNAs. Most spliceosomal snRNPs contain a common set of Sm proteins SNRPB, SNRPD1, SNRPD2, SNRPD3, SNRPE, SNRPF and SNRPG that assemble in a heptameric protein ring on the Sm site of the small nuclear RNA to form the core snRNP (Sm core). In the cytosol, the Sm proteins SNRPD1, SNRPD2, SNRPE, SNRPF and SNRPG are trapped in an inactive 6S pICln-Sm complex by the chaperone CLNS1A that controls the assembly of the core snRNP. To assemble core snRNPs, the SMN complex accepts the trapped 5Sm proteins from CLNS1A forming an intermediate. Binding of snRNA inside 5Sm triggers eviction of the SMN complex, thereby allowing binding of SNRPD3 and SNRPB to complete assembly of the core snRNP. STRAP plays a role in the cellular distribution of the SMN complex. Negatively regulates TGF-beta signaling but positively regulates the PDPK1 kinase activity by enhancing its autophosphorylation and by significantly reducing the association of PDPK1 with 14-3-3 protein. The polypeptide is Serine-threonine kinase receptor-associated protein (STRAP) (Homo sapiens (Human)).